Here is a 408-residue protein sequence, read N- to C-terminus: SERPINE1 mRNA-binding protein 1 (408 aa).

S25 is subject to Phosphoserine. Disordered stretches follow at residues 33 to 292 and 328 to 408; these read AAEN…TLDE and SKSE…PALA. Over residues 51 to 68 the composition is skewed to low complexity; the sequence is AKSAAQAAAQTNSNAAGK. K52 carries the N6-acetyllysine; alternate modification. K52 participates in a covalent cross-link: Glycyl lysine isopeptide (Lys-Gly) (interchain with G-Cter in SUMO1); alternate. An N6-acetyllysine modification is found at K68. Composition is skewed to basic and acidic residues over residues 70 to 80, 89 to 114, and 122 to 162; these read LRKESQKDRKN, VDKKEETQPPVALKKEGIRRVGRRPD, and KIID…DRPI. A Glycyl lysine isopeptide (Lys-Gly) (interchain with G-Cter in SUMO1); alternate cross-link involves residue K102. Residue K102 forms a Glycyl lysine isopeptide (Lys-Gly) (interchain with G-Cter in SUMO2); alternate linkage. An N6-acetyllysine mark is found at K122 and K140. Over residues 164 to 182 the composition is skewed to gly residues; sequence GRGGLGRGRGGRGRGMGRG. Omega-N-methylarginine occurs at positions 165 and 188. Basic and acidic residues predominate over residues 183 to 199; that stretch reads DGFDSRGKREFDRHSGS. S197 is subject to Phosphoserine. A Phosphoserine; by MTOR modification is found at S199. Residues S203, S205, and S208 each carry the phosphoserine modification. K211 is modified (N6-acetyllysine; alternate). A Glycyl lysine isopeptide (Lys-Gly) (interchain with G-Cter in SUMO2); alternate cross-link involves residue K211. An Omega-N-methylarginine modification is found at R216. S221 is subject to Phosphoserine. H222 is covalently cross-linked (Glycyl lysine isopeptide (Lys-Gly) (interchain with G-Cter in SUMO2)). A Phosphothreonine; by MTOR modification is found at T226. A Glycyl lysine isopeptide (Lys-Gly) (interchain with G-Cter in SUMO1); alternate cross-link involves residue K228. Residue K228 forms a Glycyl lysine isopeptide (Lys-Gly) (interchain with G-Cter in SUMO2); alternate linkage. K228 participates in a covalent cross-link: Glycyl lysine isopeptide (Lys-Gly) (interchain with G-Cter in SUMO2). L231, S234, and Y237 each carry phosphoserine. Phosphothreonine is present on S234. Residue K240 is modified to Phosphothreonine. The span at 240–253 shows a compositional bias: polar residues; it reads KQISYNYSDLDQSN. A compositionally biased stretch (basic and acidic residues) spans 261–275; the sequence is GEEHHPVADTENKEN. A Glycyl lysine isopeptide (Lys-Gly) (interchain with G-Cter in SUMO1); alternate cross-link involves residue K281. K281 participates in a covalent cross-link: Glycyl lysine isopeptide (Lys-Gly) (interchain with G-Cter in SUMO2); alternate. Basic and acidic residues-rich tracts occupy residues 282-292 and 328-342; these read EEGPKEMTLDE and SKSEEAHAEDSVMDH. K329 carries the post-translational modification N6-acetyllysine. The residue at position 330 (S330) is a Phosphoserine. Residues 363 to 372 are compositionally biased toward gly residues; that stretch reads GRPGRGGRGG. Residues R364, R367, and R370 each carry the omega-N-methylarginine modification. 2 positions are modified to phosphoserine: S392 and S394.

It belongs to the SERBP1-HABP4 family. As to quaternary structure, associates with mature 80S ribosomes. Interacts with EEF2/eEF2; interaction sequesters EEF2/eEF2 at the A-site of the ribosome, thereby blocking the interaction sites of the mRNA-tRNA complex, promoting ribosome stabilization and hibernation. Interacts with SPIN1. Interacts with CHD3 and TDRD3. Interacts with ZDHHC17 (via ANK repeats). Phosphorylation by MTOR inhibits SERBP1 and relieves ribosome hibernation. Expressed at high level in the heart, skeletal muscle and kidney, and at low levels in placenta, liver and brain.

Its subcellular location is the cytoplasm. The protein localises to the nucleus. It is found in the perinuclear region. In terms of biological role, ribosome-binding protein that promotes ribosome hibernation, a process during which ribosomes are stabilized in an inactive state and preserved from proteasomal degradation. Acts via its association with EEF2/eEF2 factor, sequestering EEF2/eEF2 at the A-site of the ribosome and promoting ribosome stabilization and storage in an inactive state. May also play a role in the regulation of mRNA stability: binds to the 3'-most 134 nt of the SERPINE1/PAI1 mRNA, a region which confers cyclic nucleotide regulation of message decay. Seems to play a role in PML-nuclear bodies formation. This is SERPINE1 mRNA-binding protein 1 from Homo sapiens (Human).